Consider the following 213-residue polypeptide: Probable transaldolase (213 aa).

The active-site Schiff-base intermediate with substrate is Lys-83.

Belongs to the transaldolase family. Type 3B subfamily.

The protein localises to the cytoplasm. It carries out the reaction D-sedoheptulose 7-phosphate + D-glyceraldehyde 3-phosphate = D-erythrose 4-phosphate + beta-D-fructose 6-phosphate. Its pathway is carbohydrate degradation; pentose phosphate pathway; D-glyceraldehyde 3-phosphate and beta-D-fructose 6-phosphate from D-ribose 5-phosphate and D-xylulose 5-phosphate (non-oxidative stage): step 2/3. In terms of biological role, transaldolase is important for the balance of metabolites in the pentose-phosphate pathway. This chain is Probable transaldolase, found in Syntrophomonas wolfei subsp. wolfei (strain DSM 2245B / Goettingen).